Reading from the N-terminus, the 200-residue chain is MWPGVIEQTANGRESYDLPSRLLKDRIVLVQGEVEDSMATSIVAQLLFLEAQDPTKEISMYINSPGGSVTAGLSITDTMNFIKAPVTTIVMGLAASMGTIIASSGEKGHRFMLPNAEYLIHQPMGGAVGGTQQTDMAIIAEQLTKTRDKLNKILADASDRDLETIARDTERDHWMSAEETLAYGFIDGILTKSGEKPTTK.

The Nucleophile role is filled by S96. H121 is a catalytic residue.

This sequence belongs to the peptidase S14 family. As to quaternary structure, fourteen ClpP subunits assemble into 2 heptameric rings which stack back to back to give a disk-like structure with a central cavity, resembling the structure of eukaryotic proteasomes.

It localises to the cytoplasm. The catalysed reaction is Hydrolysis of proteins to small peptides in the presence of ATP and magnesium. alpha-casein is the usual test substrate. In the absence of ATP, only oligopeptides shorter than five residues are hydrolyzed (such as succinyl-Leu-Tyr-|-NHMec, and Leu-Tyr-Leu-|-Tyr-Trp, in which cleavage of the -Tyr-|-Leu- and -Tyr-|-Trp bonds also occurs).. In terms of biological role, cleaves peptides in various proteins in a process that requires ATP hydrolysis. Has a chymotrypsin-like activity. Plays a major role in the degradation of misfolded proteins. The polypeptide is ATP-dependent Clp protease proteolytic subunit (Leuconostoc citreum (strain KM20)).